The primary structure comprises 154 residues: Interleukin-2 (154 aa).

An N-terminal signal peptide occupies residues 1-20; sequence MYRMQLLSCIALSLALITNS. An O-linked (GalNAc...) threonine glycan is attached at T23. C78 and C126 are joined by a disulfide.

Belongs to the IL-2 family.

The protein localises to the secreted. Cytokine produced by activated CD4-positive helper T-cells and to a lesser extend activated CD8-positive T-cells and natural killer (NK) cells that plays pivotal roles in the immune response and tolerance. Binds to a receptor complex composed of either the high-affinity trimeric IL-2R (IL2RA/CD25, IL2RB/CD122 and IL2RG/CD132) or the low-affinity dimeric IL-2R (IL2RB and IL2RG). Interaction with the receptor leads to oligomerization and conformation changes in the IL-2R subunits resulting in downstream signaling starting with phosphorylation of JAK1 and JAK3. In turn, JAK1 and JAK3 phosphorylate the receptor to form a docking site leading to the phosphorylation of several substrates including STAT5. This process leads to activation of several pathways including STAT, phosphoinositide-3-kinase/PI3K and mitogen-activated protein kinase/MAPK pathways. Functions as a T-cell growth factor and can increase NK-cell cytolytic activity as well. Promotes strong proliferation of activated B-cells and subsequently immunoglobulin production. Plays a pivotal role in regulating the adaptive immune system by controlling the survival and proliferation of regulatory T-cells, which are required for the maintenance of immune tolerance. Moreover, participates in the differentiation and homeostasis of effector T-cell subsets, including Th1, Th2, Th17 as well as memory CD8-positive T-cells. In Saimiri sciureus (Common squirrel monkey), this protein is Interleukin-2 (IL2).